The chain runs to 395 residues: Putative 8-amino-7-oxononanoate synthase (395 aa).

A substrate-binding site is contributed by Arg-23. Residue 110 to 111 (GY) participates in pyridoxal 5'-phosphate binding. His-135 lines the substrate pocket. Pyridoxal 5'-phosphate is bound by residues Ser-182, 207-210 (DEAH), and 239-242 (TFSK). Lys-242 is subject to N6-(pyridoxal phosphate)lysine. Thr-356 contributes to the substrate binding site.

Belongs to the class-II pyridoxal-phosphate-dependent aminotransferase family. BioF subfamily. In terms of assembly, homodimer. The cofactor is pyridoxal 5'-phosphate.

It catalyses the reaction 6-carboxyhexanoyl-[ACP] + L-alanine + H(+) = (8S)-8-amino-7-oxononanoate + holo-[ACP] + CO2. It functions in the pathway cofactor biosynthesis; biotin biosynthesis. Catalyzes the decarboxylative condensation of pimeloyl-[acyl-carrier protein] and L-alanine to produce 8-amino-7-oxononanoate (AON), [acyl-carrier protein], and carbon dioxide. This Bacillus cereus (strain ATCC 10987 / NRS 248) protein is Putative 8-amino-7-oxononanoate synthase (bioF).